A 515-amino-acid chain; its full sequence is ATP synthase subunit alpha (515 aa).

169–176 contributes to the ATP binding site; sequence GDRQTGKT.

The protein belongs to the ATPase alpha/beta chains family. As to quaternary structure, F-type ATPases have 2 components, CF(1) - the catalytic core - and CF(0) - the membrane proton channel. CF(1) has five subunits: alpha(3), beta(3), gamma(1), delta(1), epsilon(1). CF(0) has three main subunits: a(1), b(2) and c(9-12). The alpha and beta chains form an alternating ring which encloses part of the gamma chain. CF(1) is attached to CF(0) by a central stalk formed by the gamma and epsilon chains, while a peripheral stalk is formed by the delta and b chains.

The protein resides in the cell inner membrane. The catalysed reaction is ATP + H2O + 4 H(+)(in) = ADP + phosphate + 5 H(+)(out). Produces ATP from ADP in the presence of a proton gradient across the membrane. The alpha chain is a regulatory subunit. The polypeptide is ATP synthase subunit alpha (Neisseria meningitidis serogroup C (strain 053442)).